Here is a 600-residue protein sequence, read N- to C-terminus: Probable translation initiation factor IF-2 (600 aa).

Residues 13–228 form the tr-type G domain; that stretch reads LRTPIVAVLG…VLMGLAQRYM (216 aa). The G1 stretch occupies residues 22–29; it reads GHVDHGKT. 22-29 provides a ligand contact to GTP; the sequence is GHVDHGKT. Residues 47-51 are G2; the sequence is AITQH. The segment at 84 to 87 is G3; sequence DTPG. Residues 84–88 and 138–141 contribute to the GTP site; these read DTPGH and NKID. The G4 stretch occupies residues 138-141; it reads NKID. Positions 140 to 162 are disordered; the sequence is IDTTPGWNPNPDAPVQGTYDDQS. The segment at 206–208 is G5; it reads SAE.

Belongs to the TRAFAC class translation factor GTPase superfamily. Classic translation factor GTPase family. IF-2 subfamily.

Its function is as follows. Function in general translation initiation by promoting the binding of the formylmethionine-tRNA to ribosomes. Seems to function along with eIF-2. This Halobacterium salinarum (strain ATCC 700922 / JCM 11081 / NRC-1) (Halobacterium halobium) protein is Probable translation initiation factor IF-2.